The chain runs to 283 residues: Diaminopimelate epimerase (283 aa).

Residues Asn-13, Gln-46, and Asn-66 each contribute to the substrate site. The Proton donor role is filled by Cys-75. Substrate-binding positions include 76 to 77 (GN), Asn-166, Asn-199, and 217 to 218 (ER). Cys-226 (proton acceptor) is an active-site residue. Substrate is bound at residue 227 to 228 (GT).

The protein belongs to the diaminopimelate epimerase family. As to quaternary structure, homodimer.

The protein resides in the cytoplasm. The catalysed reaction is (2S,6S)-2,6-diaminopimelate = meso-2,6-diaminopimelate. It participates in amino-acid biosynthesis; L-lysine biosynthesis via DAP pathway; DL-2,6-diaminopimelate from LL-2,6-diaminopimelate: step 1/1. Its function is as follows. Catalyzes the stereoinversion of LL-2,6-diaminopimelate (L,L-DAP) to meso-diaminopimelate (meso-DAP), a precursor of L-lysine and an essential component of the bacterial peptidoglycan. In Herminiimonas arsenicoxydans, this protein is Diaminopimelate epimerase.